Consider the following 483-residue polypeptide: Membrane-bound lytic murein transglycosylase F (483 aa).

Positions 1-18 (MKGLIARFIAGFALLLWA) are cleaved as a signal peptide. Residues 19-267 (WDMVFPWQQL…RIEEKYFNHL (249 aa)) are non-LT domain. The segment at 269-483 (HFDYVDIQSY…SKESDSTLKE (215 aa)) is LT domain. Glutamate 312 is an active-site residue. The segment at 458–483 (QQIQNNEEQPSVPQEISKESDSTLKE) is disordered. The span at 473-483 (ISKESDSTLKE) shows a compositional bias: basic and acidic residues.

In the N-terminal section; belongs to the bacterial solute-binding protein 3 family. The protein in the C-terminal section; belongs to the transglycosylase Slt family.

The protein localises to the cell outer membrane. It carries out the reaction Exolytic cleavage of the (1-&gt;4)-beta-glycosidic linkage between N-acetylmuramic acid (MurNAc) and N-acetylglucosamine (GlcNAc) residues in peptidoglycan, from either the reducing or the non-reducing ends of the peptidoglycan chains, with concomitant formation of a 1,6-anhydrobond in the MurNAc residue.. Murein-degrading enzyme that degrades murein glycan strands and insoluble, high-molecular weight murein sacculi, with the concomitant formation of a 1,6-anhydromuramoyl product. Lytic transglycosylases (LTs) play an integral role in the metabolism of the peptidoglycan (PG) sacculus. Their lytic action creates space within the PG sacculus to allow for its expansion as well as for the insertion of various structures such as secretion systems and flagella. The sequence is that of Membrane-bound lytic murein transglycosylase F from Actinobacillus pleuropneumoniae serotype 5b (strain L20).